A 70-amino-acid chain; its full sequence is Peptide BmKn2 (70 aa).

The signal sequence occupies residues 1-23; that stretch reads MKSQTFFLLFLVVLLLAISQSEA. At Phe36 the chain carries Phenylalanine amide. Residues 40 to 70 constitute a propeptide that is removed on maturation; sequence SMRDMDTMKYLYDPSLSAADLKTLQKLMENY.

It belongs to the non-disulfide-bridged peptide (NDBP) superfamily. Short antimicrobial peptide (group 4) family. In terms of tissue distribution, expressed by the venom gland.

The protein localises to the secreted. It localises to the target cell membrane. Its function is as follows. Antimicrobial peptide with potent activity against bacteria. Has strong antibacterial activity against Gram-positive bacteria S.aureus, M.luteus, B.subtilis, and Gram-negative bacteria E.coli, P.aeruginosa and N.gonorrhoeae. Also shows low activity against HIV-1 PV. The polypeptide is Peptide BmKn2 (Olivierus martensii (Manchurian scorpion)).